A 137-amino-acid polypeptide reads, in one-letter code: Protein phosphatase 1 regulatory subunit 1B (137 aa).

Residues 1 to 137 (DPKDRKKIQF…EEEEEEEDSQ (137 aa)) form a disordered region. The residue at position 33 (T33) is a Phosphothreonine; by PKA. Basic and acidic residues predominate over residues 40–62 (LXEHSSPEEEASPHQRAAGEGHH). 2 positions are modified to phosphoserine: S44 and S45. T74 bears the Phosphothreonine; by CDK5 mark. Over residues 88 to 99 (HLQSISNLGENQ) the composition is skewed to polar residues. A Phosphoserine modification is found at S101. Over residues 108–117 (GELRELGYPR) the composition is skewed to basic and acidic residues. The span at 118–137 (EEEEEEEEDDEEEEEEEDSQ) shows a compositional bias: acidic residues. Position 136 is a phosphoserine (S136).

This sequence belongs to the protein phosphatase inhibitor 1 family. In terms of processing, phosphorylation of Thr-33 is required for activity. Post-translationally, dopamine- and cyclic AMP-regulated neuronal phosphoprotein.

Its subcellular location is the cytoplasm. Inhibitor of protein-phosphatase 1. In Sus scrofa (Pig), this protein is Protein phosphatase 1 regulatory subunit 1B (PPP1R1B).